A 90-amino-acid chain; its full sequence is DNA-directed RNA polymerase subunit omega (90 aa).

Belongs to the RNA polymerase subunit omega family. As to quaternary structure, the RNAP catalytic core consists of 2 alpha, 1 beta, 1 beta' and 1 omega subunit. When a sigma factor is associated with the core the holoenzyme is formed, which can initiate transcription.

It carries out the reaction RNA(n) + a ribonucleoside 5'-triphosphate = RNA(n+1) + diphosphate. Functionally, promotes RNA polymerase assembly. Latches the N- and C-terminal regions of the beta' subunit thereby facilitating its interaction with the beta and alpha subunits. The protein is DNA-directed RNA polymerase subunit omega (rpoZ) of Streptomyces coelicolor (strain ATCC BAA-471 / A3(2) / M145).